Here is a 154-residue protein sequence, read N- to C-terminus: 6,7-dimethyl-8-ribityllumazine synthase (154 aa).

5-amino-6-(D-ribitylamino)uracil is bound by residues Phe22, 56 to 58 (AFE), and 80 to 82 (AVI). Position 85-86 (85-86 (AT)) interacts with (2S)-2-hydroxy-3-oxobutyl phosphate. The active-site Proton donor is the His88. 5-amino-6-(D-ribitylamino)uracil is bound at residue Phe113. Arg127 lines the (2S)-2-hydroxy-3-oxobutyl phosphate pocket.

The protein belongs to the DMRL synthase family.

It carries out the reaction (2S)-2-hydroxy-3-oxobutyl phosphate + 5-amino-6-(D-ribitylamino)uracil = 6,7-dimethyl-8-(1-D-ribityl)lumazine + phosphate + 2 H2O + H(+). Its pathway is cofactor biosynthesis; riboflavin biosynthesis; riboflavin from 2-hydroxy-3-oxobutyl phosphate and 5-amino-6-(D-ribitylamino)uracil: step 1/2. Its function is as follows. Catalyzes the formation of 6,7-dimethyl-8-ribityllumazine by condensation of 5-amino-6-(D-ribitylamino)uracil with 3,4-dihydroxy-2-butanone 4-phosphate. This is the penultimate step in the biosynthesis of riboflavin. The chain is 6,7-dimethyl-8-ribityllumazine synthase from Desulfitobacterium hafniense (strain DSM 10664 / DCB-2).